The primary structure comprises 183 residues: Dual-action ribosomal maturation protein DarP (183 aa).

It belongs to the DarP family.

It localises to the cytoplasm. In terms of biological role, member of a network of 50S ribosomal subunit biogenesis factors which assembles along the 30S-50S interface, preventing incorrect 23S rRNA structures from forming. Promotes peptidyl transferase center (PTC) maturation. The sequence is that of Dual-action ribosomal maturation protein DarP from Salmonella arizonae (strain ATCC BAA-731 / CDC346-86 / RSK2980).